Reading from the N-terminus, the 339-residue chain is RNA polymerase II holoenzyme cyclin-like subunit (339 aa).

The segment at 48 to 67 is disordered; it reads PNSADSSNGNAANNGGGNGR. Low complexity predominate over residues 49–60; the sequence is NSADSSNGNAAN. The Cyclin N-terminal domain occupies 93–194; the sequence is RIYCYFLIMK…LIEELQCYLI (102 aa).

Belongs to the cyclin family. Cyclin C subfamily. In terms of assembly, component of the SRB8-11 complex, a regulatory module of the Mediator complex.

The protein localises to the nucleus. Component of the SRB8-11 complex. The SRB8-11 complex is a regulatory module of the Mediator complex which is itself involved in regulation of basal and activated RNA polymerase II-dependent transcription. The SRB8-11 complex may be involved in the transcriptional repression of a subset of genes regulated by Mediator. It may inhibit the association of the Mediator complex with RNA polymerase II to form the holoenzyme complex. The SRB8-11 complex phosphorylates the C-terminal domain (CTD) of the largest subunit of RNA polymerase II. The protein is RNA polymerase II holoenzyme cyclin-like subunit (SSN8) of Candida glabrata (strain ATCC 2001 / BCRC 20586 / JCM 3761 / NBRC 0622 / NRRL Y-65 / CBS 138) (Yeast).